Reading from the N-terminus, the 3301-residue chain is Cadherin EGF LAG seven-pass G-type receptor 3 (3301 aa).

An N-terminal signal peptide occupies residues 1 to 31; it reads MARRPLWWGLPGPSTPVLLLLLLSLFPFSRE. Residues 32–2531 are Extracellular-facing; that stretch reads ELGGGGDQDW…RLEGDLELLA (2500 aa). Disordered regions lie at residues 148–189 and 202–314; these read LPLD…ARRS and KLWE…NRHP. The span at 267-276 shows a compositional bias: basic residues; sequence MRSRGLFRRR. Cadherin domains follow at residues 317–424, 425–536, 537–642, 643–747, 748–849, 850–952, 953–1058, 1059–1160, and 1161–1257; these read PQYN…APVF, EQAQ…APQF, SEKR…APIF, VSTP…RPEF, TMKE…RPVF, QSAH…APQF, VASH…APVF, PAEE…SPVL, and NNFQ…VVII. N-linked (GlcNAc...) asparagine glycosylation occurs at Asn623. An N-linked (GlcNAc...) asparagine glycan is attached at Asn838. Residues Asn1173, Asn1213, Asn1308, and Asn1318 are each glycosylated (N-linked (GlcNAc...) asparagine). An EGF-like 1; calcium-binding domain is found at 1366-1424; sequence DDNVCLREPCENYMKCVSVLRFDSSAPFLASTSTLFRPIQPIAGLRCRCPPGFTGDFCE. 9 cysteine pairs are disulfide-bonded: Cys1370–Cys1381, Cys1375–Cys1412, Cys1414–Cys1423, Cys1430–Cys1441, Cys1435–Cys1450, Cys1452–Cys1459, Cys1468–Cys1479, Cys1473–Cys1489, and Cys1491–Cys1502. Residues 1426-1460 form the EGF-like 2; calcium-binding domain; that stretch reads ELDLCYSNPCRNGGACARREGGYTCVCRPRFTDCE. In terms of domain architecture, EGF-like 3; calcium-binding spans 1464–1503; the sequence is EAGRCVPGVCRNGGTCTNAPNGGFRCQCPAGGAFEGPRCE. The Laminin G-like 1 domain occupies 1504–1708; it reads VAARSFPPSS…VANNGTMAGC (205 aa). N-linked (GlcNAc...) asparagine glycans are attached at residues Asn1638 and Asn1702. 4 cysteine pairs are disulfide-bonded: Cys1682-Cys1708, Cys1715-Cys1726, Cys1720-Cys1735, and Cys1737-Cys1746. Residues 1711–1747 enclose the EGF-like 4; calcium-binding domain; sequence KSHFCASGPCKNNGFCSERWGGFSCDCPVGFGGKDCR. A Laminin G-like 2 domain is found at 1751–1933; the sequence is AHPYHFQGNG…SHRVNVEPGC (183 aa). Asn1759 carries an N-linked (GlcNAc...) asparagine glycan. Cystine bridges form between Cys1904–Cys1933, Cys1939–Cys1950, Cys1944–Cys1959, Cys1961–Cys1970, Cys1974–Cys1985, Cys1979–Cys1997, Cys1999–Cys2008, Cys2016–Cys2029, and Cys2031–Cys2041. Residues 1935–1971 form the EGF-like 5; calcium-binding domain; that stretch reads VTNPCASGPCPPHADCKDLWQTFSCTCRPGYYGPGCV. The residue at position 1952 (Asp1952) is a (3R)-3-hydroxyaspartate. One can recognise an EGF-like 6; calcium-binding domain in the interval 1972 to 2002; sequence DACLLNPCQNQGSCRHLQGAPHGYTCDCVSG. The EGF-like 7; calcium-binding domain maps to 2003–2042; sequence YFGQHCEHRVDQQCPRGWWGSPTCGPCNCDVHKGFDPNCN. Residue Asn2042 is glycosylated (N-linked (GlcNAc...) asparagine). Residues 2044-2079 enclose the EGF-like 8; calcium-binding domain; it reads TNGQCHCKEFHYRPRGSDSCLPCDCYPVGSTSRSCA. Cystine bridges form between Cys2048/Cys2063, Cys2050/Cys2066, Cys2068/Cys2078, Cys2087/Cys2096, and Cys2099/Cys2111. The 48-residue stretch at 2066 to 2113 folds into the Laminin EGF-like domain; that stretch reads CDCYPVGSTSRSCAPHSGQCPCRPGALGRQCNSCDSPFAEVTASGCRV. The residue at position 2115 (Tyr2115) is a Phosphotyrosine. Asn2166, Asn2185, Asn2375, Asn2465, and Asn2497 each carry an N-linked (GlcNAc...) asparagine glycan. The interval 2353–2388 is disordered; sequence LLPSQASQPSPSEVLPTSSNAENATASSVVSPPAPL. The segment covering 2355–2383 has biased composition (low complexity); it reads PSQASQPSPSEVLPTSSNAENATASSVVS. Residues 2357-2521 form the GAIN-B domain; that stretch reads QASQPSPSEV…GVLMDASPRE (165 aa). Cystine bridges form between Cys2471–Cys2503 and Cys2491–Cys2505. A GPS region spans residues 2471 to 2521; that stretch reads CVQWDPPGPTDQHGMWTARDCELVHRNGSHARCRCSRTGTFGVLMDASPRE. The helical transmembrane segment at 2532 to 2552 threads the bilayer; that stretch reads VFTHVVVAVSVTALVLTAAVL. Residues 2553-2563 are Cytoplasmic-facing; the sequence is LSLRSLKSNVR. A helical transmembrane segment spans residues 2564–2584; the sequence is GIHANVAAALGVAELLFLLGI. Residues 2585 to 2592 lie on the Extracellular side of the membrane; the sequence is HRTHNQLL. Residues 2593–2613 traverse the membrane as a helical segment; sequence CTAVAILLHYFFLSTFAWLLV. The Cytoplasmic portion of the chain corresponds to 2614–2634; sequence QGLHLYRMQVEPRNVDRGAMR. Residues 2635–2655 form a helical membrane-spanning segment; it reads FYHALGWGVPAVLLGLAVGLD. Over 2656-2673 the chain is Extracellular; that stretch reads PEGYGNPDFCWISIHEPL. Residues 2674 to 2694 form a helical membrane-spanning segment; sequence IWSFAGPIVLVIVMNGTMFLL. Residues 2695–2716 are Cytoplasmic-facing; sequence AARTSCSTGQREAKKTSVLTLR. The helical transmembrane segment at 2717–2737 threads the bilayer; the sequence is SSFLLLLLVSASWLFGLLAVN. Residues 2738–2744 are Extracellular-facing; that stretch reads HSILAFH. The helical transmembrane segment at 2745–2765 threads the bilayer; that stretch reads YLHAGLCGLQGLAVLLLFCVL. Residues 2766–3301 are Cytoplasmic-facing; sequence NADARAAWTP…SEVPRSEGHS (536 aa). Disordered stretches follow at residues 2823–2844, 2879–2919, and 2969–2992; these read SSAR…YLRD, AGAD…RPLR, and SNKD…TSLG. A compositionally biased stretch (acidic residues) spans 2881–2891; the sequence is ADSDSDSDLSL. Residues 2910 to 2919 are compositionally biased toward basic residues; the sequence is TRGRFQRPLR. Tyr3042 is modified (phosphotyrosine). A disordered region spans residues 3083–3301; sequence APVLHPLSRP…SEVPRSEGHS (219 aa). A Phosphoserine modification is found at Ser3090. A compositionally biased stretch (basic and acidic residues) spans 3094 to 3111; that stretch reads SQERLDTAPARLEARDRG. Low complexity-rich tracts occupy residues 3168–3189 and 3239–3261; these read SPQR…SLSR and LSSI…STPS. A compositionally biased stretch (polar residues) spans 3276 to 3289; that stretch reads TPRSATSHSISELS.

The protein belongs to the G-protein coupled receptor 2 family. LN-TM7 subfamily. As to expression, expressed in the CNS and in the eye.

It is found in the cell membrane. Functionally, receptor that may have an important role in cell/cell signaling during nervous system formation. The sequence is that of Cadherin EGF LAG seven-pass G-type receptor 3 (Celsr3) from Mus musculus (Mouse).